Here is an 838-residue protein sequence, read N- to C-terminus: DNA gyrase subunit A (838 aa).

Positions 41–510 (LPEVRDGLKP…ADGDVSDEDL (470 aa)) constitute a Topo IIA-type catalytic domain. Y129 acts as the O-(5'-phospho-DNA)-tyrosine intermediate in catalysis. Positions 537–543 (QKRGGKG) match the GyrA-box motif.

It belongs to the type II topoisomerase GyrA/ParC subunit family. In terms of assembly, heterotetramer, composed of two GyrA and two GyrB chains. In the heterotetramer, GyrA contains the active site tyrosine that forms a transient covalent intermediate with DNA, while GyrB binds cofactors and catalyzes ATP hydrolysis. Requires Mg(2+) as cofactor.

It is found in the cytoplasm. The catalysed reaction is ATP-dependent breakage, passage and rejoining of double-stranded DNA.. Its activity is regulated as follows. DNA supercoiling is inhibited by EDTA, novobiocin, coumermycin and ciprofloxacin. In terms of biological role, a type II topoisomerase that negatively supercoils closed circular double-stranded (ds) DNA in an ATP-dependent manner to modulate DNA topology and maintain chromosomes in an underwound state. Also catalyzes the interconversion of other topological isomers of double-stranded DNA rings, including catenanes and knotted rings. Relaxes negatively supercoiled DNA in an ATP-independent manner. A linear reaction intermediate can be trapped in the presence of the antibiotic ciprofloxacin. Negative supercoiling favors strand separation, and DNA replication, transcription, recombination and repair, all of which involve strand separation. Type II topoisomerases break and join 2 DNA strands simultaneously in an ATP-dependent manner. The polypeptide is DNA gyrase subunit A (Mycobacterium bovis (strain BCG / Pasteur 1173P2)).